We begin with the raw amino-acid sequence, 249 residues long: MGEAFAERVAVVTGAASGIGAATARLLAERGAAVVIGDVAEGADDVARALRDAGHRALWVRTDVTDEDSVAALMDRAAAEFGSLDVLVANAGIAEPKAPLHELDVAAWRRVIEIDLTGVALCGKHALRHMSAAGSGAIVNVSSILGAVGQANSSSYSAAKAGVANLTRSAAVTYAASGIRVNAVAPGYADTPLVAGLPADVRATMAARQPIGRLARPEEVAEAIAFLASDAASFVVGAILAVDGGYTAV.

The NAD(+) site is built by Asp-38, Asp-63, Val-64, Asn-90, Tyr-156, Lys-160, Ala-189, and Thr-191. Catalysis depends on Tyr-156, which acts as the Proton acceptor.

This sequence belongs to the short-chain dehydrogenases/reductases (SDR) family. As to quaternary structure, homotetramer.

It catalyses the reaction cis-4-hydroxycyclohexane-1-carboxylate + NAD(+) = 4-oxocyclohexane-1-carboxylate + NADH + H(+). Functionally, dehydrogenase involved in a cyclohexanecarboxylate (CHCA) degradation pathway. Catalyzes the NAD(+)-dependent dehydrogenation of cis-4-hydroxycyclohexanecarboxylate (cis-4-hydroxyCHCA) to form 4-oxocyclohexanecarboxylate (4-oxoCHCA). Is highly specific for the cis-4-hydroxy derivative and shows only weak activity with trans-4-hydroxyCHCA. Cannot use NADP(+). The polypeptide is Cis-4-hydroxycyclohexanecarboxylate dehydrogenase (Sinomonas cyclohexanicum (Corynebacterium cyclohexanicum)).